The following is a 51-amino-acid chain: Large ribosomal subunit protein eL39 (51 aa).

A disordered region spans residues 32–51 (KGSVKQHPKMRHWRRKNLKK). Over residues 33–51 (GSVKQHPKMRHWRRKNLKK) the composition is skewed to basic residues.

The protein belongs to the eukaryotic ribosomal protein eL39 family.

The polypeptide is Large ribosomal subunit protein eL39 (Methanococcus maripaludis (strain C5 / ATCC BAA-1333)).